The following is a 444-amino-acid chain: MPSIILPPKPTALQKPHLNLAVIGHVDNGKSTLVGRLLYETGYVDEKAFKEIEEMAKKMGKEDFAFAWILDRFKEERERGVTIEATHVGFETNKLFITIIDLPGHRDFIKNMIVGASQADAALFVISARPGEFETAIGPQGQGREHLFLIRTLGVQQIVVAVNKMDIVNYDQKRYEQIKAEVSKLLKLLGYDPSKIHFIPVSAIKGDNVKTKSSNTPWYNGPTLLEALDTFQPPPRPVDKPLRMPIQDVFTITGAGTVVVGRVETGVLKVGDRVVIVPPAKVGDVRSIETHHMKLEQAQPGDNIGVNVRGISKEDVRRGDVLGKVDNVPTVAEEIVARVVILWHPTAIGPGYAPVMHIHTATVPVQIVELVSKLDPRTGQAVEQKPQFIKQGDVAIVKIKPLKPVVAEKFSEFPALGRFALRDMGRTIAAGQIIEVKPAQVQIK.

In terms of domain architecture, tr-type G spans 15 to 236; it reads KPHLNLAVIG…ALDTFQPPPR (222 aa). The interval 24–31 is G1; sequence GHVDNGKS. 24–31 contacts GTP; sequence GHVDNGKS. Position 31 (Ser-31) interacts with Mg(2+). Residues 80–84 form a G2 region; that stretch reads GVTIE. Residues 101-104 are G3; it reads DLPG. Residues 101–105 and 163–166 each bind GTP; these read DLPGH and NKMD. Positions 163-166 are G4; the sequence is NKMD. Residues 202–204 form a G5 region; it reads SAI.

Belongs to the TRAFAC class translation factor GTPase superfamily. Classic translation factor GTPase family. EF-Tu/EF-1A subfamily.

The protein resides in the cytoplasm. It catalyses the reaction GTP + H2O = GDP + phosphate + H(+). In terms of biological role, GTP hydrolase that promotes the GTP-dependent binding of aminoacyl-tRNA to the A-site of ribosomes during protein biosynthesis. The protein is Elongation factor 1-alpha of Pyrobaculum islandicum (strain DSM 4184 / JCM 9189 / GEO3).